The following is a 526-amino-acid chain: pH-sensitive chloride channel 2 (526 aa).

The first 18 residues, 1-18 (MDTLGIFVLISYLGLSSA), serve as a signal peptide directing secretion. At 19–300 (AGVHLGDLQQ…VLLTREVGYY (282 aa)) the chain is on the extracellular side. Asparagine 33, asparagine 42, asparagine 52, asparagine 192, asparagine 231, asparagine 264, asparagine 271, and asparagine 283 each carry an N-linked (GlcNAc...) asparagine glycan. Residues 301–321 (VIDYFLPSIMIVTISWVSFWL) traverse the membrane as a helical segment. Residues 322-327 (QADQTP) lie on the Cytoplasmic side of the membrane. A helical transmembrane segment spans residues 328 to 347 (ARTTLGCTTLLSFITLSLSQ). The Extracellular segment spans residues 348–360 (ENNLMKVSYVTMS). Residues 361 to 381 (EVWFLVCTIFIFGSLVEFAFV) traverse the membrane as a helical segment. Topologically, residues 382 to 505 (NTIWRRNNDL…VSLWIDRKMR (124 aa)) are cytoplasmic. Positions 463–488 (ISLDEQDETSTSESSDSSKEKPAQTF) are disordered. The chain crosses the membrane as a helical span at residues 506-526 (FVFPLSFIVFNALFWTLVYCL).

It belongs to the ligand-gated ion channel (TC 1.A.9) family. In third-instar larvae, expressed in the principal cells of the excretory Malpighian tubules (at protein level). Also detected in the enterocytes of the copper cell region and the iron cell region of the larval midgut (at protein level). In the copper cell region expression is confined to the interstitial cells and in the iron cell region it is expressed in the anterior portion (at protein level). Expressed in the Malpighian tubules and the middle midgut of third instar larvae and adults.

It localises to the apical cell membrane. The protein localises to the cell projection. Its subcellular location is the microvillus membrane. It is found in the late endosome membrane. The protein resides in the lysosome membrane. The enzyme catalyses chloride(in) = chloride(out). Functionally, ligand and pH-gated channel that mediates chloride transport primarily in the mid-gut and thereby functions in larval metabolism and fluid homeostasis. Channel opening is triggered by zinc binding or, to a lesser extent, an increase in extracellular pH. Zinc-dependent activity in the mid-gut is required for modulating Tor-dependent metabolic programs that promote larval feeding and systematic growth. It may therefore act as an intestinal zinc sensor that mediates larval growth and metabolism in response to micronutrient availability. Activates Tor signaling via its activity in maintaining lysosome homeostasis in interstitial cells and/or by its role in activating the release of insulin-like peptides in the brain after feeding, via an unknown mechanism. Functions in lysosome homeostasis by regulating chloride transport into enterocyte lysosomes to sustain V-ATPase function which maintains lysosomal acidification and consequently promotes Tor activation at the lysosome membrane. Also appears to play a role in regulating fluid secretion and osmotic homeostasis in Malpighian tubules in response to the pH of extracellular urine. This function is important for proper urine production during diuresis. The chain is pH-sensitive chloride channel 2 from Drosophila melanogaster (Fruit fly).